The primary structure comprises 170 residues: Putative pre-16S rRNA nuclease (170 aa).

Residues 1–25 (MVPAQHRPPDRPGDPAHDPGRGRRL) form a disordered region. Residues 7-21 (RPPDRPGDPAHDPGR) are compositionally biased toward basic and acidic residues.

The protein belongs to the YqgF nuclease family.

It localises to the cytoplasm. Functionally, could be a nuclease involved in processing of the 5'-end of pre-16S rRNA. In Mycobacterium tuberculosis (strain ATCC 25177 / H37Ra), this protein is Putative pre-16S rRNA nuclease.